We begin with the raw amino-acid sequence, 142 residues long: TYAEVESFGVGQSATAVYTAPGDGRDLNITIDADGGYVIHMDYRFDWGGNPSTGKPWEDILILNSKPAQTWGPQQHVNNFYFTPGTHVTLGDKSNDGHFAIIADGIQVATYDHRLPVNSVKEVKFSTTAGSGTDIWDLLLLP.

Residues 1 to 141 form the Galectin domain; that stretch reads TYAEVESFGV…GTDIWDLLLL (141 aa).

In terms of assembly, homotetramer.

Cytotoxic activity against L.infantum promastigotes is completely inhibited by D-galactose. Inhibition activity against biofilm formation by S.aureus and S.epidermidis is inhibited by alpha-lactose. Hemagglutination activity is inhibited by alpha-lactose (MIC=100 mM), beta-lactose (MIC=100 mM), lactulose (MIC=100 mM), bovine submaxillary mucin (BSM) (MIC=32 ug/ml), fetuin (MIC=16 ug/ml), porcine stomach mucin (PSM) type 2 (MIC=8 ug/ml) and PSM type 3 (MIC=8 ug/ml). Galactose-binding lectin. Displays antibacterial and hemagglutinin activity. Inhibits the growth of L.infantum promastigotes by damaging their membrane integrity and inducing cell apoptosis via the production of reactive oxygen species (ROS). Inhibition of L.infantum promastigotes appears to increase with time (MIC=1.2 uM/ml after 24 hours, MIC=0.9 uM/ml after 48 hours and MIC=0.6 uM/ml after 72 hours). Agglutinates Gram-negative and Gram-positive bacteria including E.coli, S.aureus and S.epidermidis, and inhibits biofilm formation by S.aureus and S.epidermidis. Displays hemagglutination activity towards all types of human erythrocytes (O, A and B) and rabbit erythrocytes. In Chondrilla caribensis (Chicken liver sponge), this protein is Galactose-binding lectin.